Reading from the N-terminus, the 207-residue chain is Superoxide dismutase [Fe] (207 aa).

Fe cation is bound by residues His28, His76, Asp160, and His164.

It belongs to the iron/manganese superoxide dismutase family. As to quaternary structure, homotetramer. Fe cation serves as cofactor.

The protein localises to the secreted. The catalysed reaction is 2 superoxide + 2 H(+) = H2O2 + O2. Destroys superoxide anion radicals which are normally produced within the cells and which are toxic to biological systems. The polypeptide is Superoxide dismutase [Fe] (sodB) (Mycobacterium tuberculosis (strain CDC 1551 / Oshkosh)).